We begin with the raw amino-acid sequence, 468 residues long: Monocarboxylate transporter 6 (468 aa).

Residues 1-13 (MARALEQADGRWA) are Cytoplasmic-facing. The chain crosses the membrane as a helical span at residues 14 to 34 (WVVLLSSLVTQALTLGFPTCI). Topologically, residues 35–53 (GVFFTDLQRDFQASNSETS) are extracellular. Residues 54–74 (WFPSILGAMVHGGGPLCSILV) traverse the membrane as a helical segment. At 75-80 (KHFGCR) the chain is on the cytoplasmic side. A helical membrane pass occupies residues 81–101 (VTMMLGGVLASLGMVVSTFSG). S102 is a topological domain (extracellular). A helical transmembrane segment spans residues 103–122 (LTHLFLTAGVITGLGMCFSF). The Cytoplasmic portion of the chain corresponds to 123–138 (QSSITVVGLYFVRRRP). Residues 139–159 (LANALASMGLSMGVTLWPLLA) traverse the membrane as a helical segment. Residues 160 to 171 (RYLLETLGWRGA) lie on the Extracellular side of the membrane. Residues 172 to 192 (FLIFGGILLHCCVCGALLRPV) traverse the membrane as a helical segment. The Cytoplasmic segment spans residues 193–239 (ATNEVPEPKEDPLLPPKIPTRSCLATCVSTIRYHLAFDILRHNMGFC). Residues 240-260 (IYVTGVTWMNLGFALPHIFLV) form a helical membrane-spanning segment. Residues 261–274 (PYAMHHGVDDYWAA) are Extracellular-facing. Residues 275–295 (MLMSIVGFCNIFLRPMAGLLL) traverse the membrane as a helical segment. At 296–306 (AGRKSLAAYRK) the chain is on the cytoplasmic side. A helical membrane pass occupies residues 307–327 (YLFAVAILINGLTNLICTVSA). Topologically, residues 328–330 (DFR) are extracellular. The helical transmembrane segment at 331–351 (VLLGYCLVYSLSMCGVGILVF) threads the bilayer. The Cytoplasmic segment spans residues 352 to 368 (QVLMDIVPMDRFPSALG). A helical transmembrane segment spans residues 369-389 (LFTILCGVTSLISPPLAGLLL). The Extracellular portion of the chain corresponds to 390–396 (DKTNNFS). Residues 397–417 (YVFYMSSGFLVSGSLILGVGF) form a helical membrane-spanning segment. Topologically, residues 418-468 (YAAEKKKLKQDGQAKMENATSEMTPMHDLTSEDKDSAKKQPYPESIYMTNV) are cytoplasmic. Positions 429–468 (GQAKMENATSEMTPMHDLTSEDKDSAKKQPYPESIYMTNV) are disordered. The segment covering 446–455 (LTSEDKDSAK) has biased composition (basic and acidic residues).

It belongs to the major facilitator superfamily. Monocarboxylate porter (TC 2.A.1.13) family.

It localises to the cell membrane. Proton-linked monocarboxylate transporter. Catalyzes the rapid transport across the plasma membrane of many monocarboxylates such as lactate, pyruvate, branched-chain oxo acids derived from leucine, valine and isoleucine, and the ketone bodies acetoacetate, beta-hydroxybutyrate and acetate. This Mus musculus (Mouse) protein is Monocarboxylate transporter 6 (Slc16a5).